The following is a 101-amino-acid chain: Putative pterin-4-alpha-carbinolamine dehydratase (101 aa).

This sequence belongs to the pterin-4-alpha-carbinolamine dehydratase family.

The catalysed reaction is (4aS,6R)-4a-hydroxy-L-erythro-5,6,7,8-tetrahydrobiopterin = (6R)-L-erythro-6,7-dihydrobiopterin + H2O. This chain is Putative pterin-4-alpha-carbinolamine dehydratase, found in Nitrobacter hamburgensis (strain DSM 10229 / NCIMB 13809 / X14).